Consider the following 404-residue polypeptide: Argininosuccinate synthase (404 aa).

ATP contacts are provided by residues 11–19 and Ala40; that span reads AYSGGLDTS. Positions 92 and 97 each coordinate L-citrulline. Residue Gly122 participates in ATP binding. Residues Thr124, Asn128, and Asp129 each coordinate L-aspartate. Asn128 is a binding site for L-citrulline. 5 residues coordinate L-citrulline: Arg132, Ser181, Ser190, Glu266, and Tyr278.

It belongs to the argininosuccinate synthase family. Type 1 subfamily. In terms of assembly, homotetramer.

Its subcellular location is the cytoplasm. It carries out the reaction L-citrulline + L-aspartate + ATP = 2-(N(omega)-L-arginino)succinate + AMP + diphosphate + H(+). Its pathway is amino-acid biosynthesis; L-arginine biosynthesis; L-arginine from L-ornithine and carbamoyl phosphate: step 2/3. The protein is Argininosuccinate synthase of Moritella abyssi.